Consider the following 377-residue polypeptide: Phospho-N-acetylmuramoyl-pentapeptide-transferase (377 aa).

11 helical membrane-spanning segments follow: residues 9–29 (YITL…LVAG), 62–82 (MGGA…ADWI), 85–105 (FVWV…MDDY), 122–142 (FFWQ…AVSA), 155–175 (WVGS…VPFF), 178–198 (VSYP…IVGT), 210–230 (GLAI…AYVV), 247–267 (AAEL…FLWF), 274–294 (VFMG…IAVI), 299–319 (IVLF…MVQV), and 354–374 (QVVV…LSTL).

Belongs to the glycosyltransferase 4 family. MraY subfamily. Mg(2+) serves as cofactor.

It localises to the cell inner membrane. The catalysed reaction is UDP-N-acetyl-alpha-D-muramoyl-L-alanyl-gamma-D-glutamyl-meso-2,6-diaminopimeloyl-D-alanyl-D-alanine + di-trans,octa-cis-undecaprenyl phosphate = di-trans,octa-cis-undecaprenyl diphospho-N-acetyl-alpha-D-muramoyl-L-alanyl-D-glutamyl-meso-2,6-diaminopimeloyl-D-alanyl-D-alanine + UMP. Its pathway is cell wall biogenesis; peptidoglycan biosynthesis. Its function is as follows. Catalyzes the initial step of the lipid cycle reactions in the biosynthesis of the cell wall peptidoglycan: transfers peptidoglycan precursor phospho-MurNAc-pentapeptide from UDP-MurNAc-pentapeptide onto the lipid carrier undecaprenyl phosphate, yielding undecaprenyl-pyrophosphoryl-MurNAc-pentapeptide, known as lipid I. The chain is Phospho-N-acetylmuramoyl-pentapeptide-transferase from Bordetella parapertussis (strain 12822 / ATCC BAA-587 / NCTC 13253).